The following is an 88-amino-acid chain: Cell division topological specificity factor (88 aa).

This sequence belongs to the MinE family.

In terms of biological role, prevents the cell division inhibition by proteins MinC and MinD at internal division sites while permitting inhibition at polar sites. This ensures cell division at the proper site by restricting the formation of a division septum at the midpoint of the long axis of the cell. This chain is Cell division topological specificity factor, found in Psychromonas ingrahamii (strain DSM 17664 / CCUG 51855 / 37).